The chain runs to 508 residues: GMP synthase [glutamine-hydrolyzing] (508 aa).

Positions 1 to 189 (MILVLDFGSQ…ALLVCGCEKT (189 aa)) constitute a Glutamine amidotransferase type-1 domain. Catalysis depends on C78, which acts as the Nucleophile. Catalysis depends on residues H163 and E165. The GMPS ATP-PPase domain maps to 190-383 (WGMQHFAQKE…LGISQDFLMR (194 aa)). 217 to 223 (SGGVDST) provides a ligand contact to ATP.

As to quaternary structure, homodimer.

It carries out the reaction XMP + L-glutamine + ATP + H2O = GMP + L-glutamate + AMP + diphosphate + 2 H(+). Its pathway is purine metabolism; GMP biosynthesis; GMP from XMP (L-Gln route): step 1/1. Functionally, catalyzes the synthesis of GMP from XMP. This chain is GMP synthase [glutamine-hydrolyzing], found in Helicobacter pylori (strain Shi470).